A 337-amino-acid polypeptide reads, in one-letter code: Anthranilate phosphoribosyltransferase (337 aa).

Residues glycine 81, 84–85, serine 89, 91–94, 109–117, and alanine 121 each bind 5-phospho-alpha-D-ribose 1-diphosphate; these read GD, NVST, and KHGNRAATS. Glycine 81 contacts anthranilate. Residue serine 93 participates in Mg(2+) binding. Asparagine 112 contributes to the anthranilate binding site. Arginine 167 contributes to the anthranilate binding site. Aspartate 226 and glutamate 227 together coordinate Mg(2+).

This sequence belongs to the anthranilate phosphoribosyltransferase family. As to quaternary structure, homodimer. Mg(2+) serves as cofactor.

The catalysed reaction is N-(5-phospho-beta-D-ribosyl)anthranilate + diphosphate = 5-phospho-alpha-D-ribose 1-diphosphate + anthranilate. It functions in the pathway amino-acid biosynthesis; L-tryptophan biosynthesis; L-tryptophan from chorismate: step 2/5. Functionally, catalyzes the transfer of the phosphoribosyl group of 5-phosphorylribose-1-pyrophosphate (PRPP) to anthranilate to yield N-(5'-phosphoribosyl)-anthranilate (PRA). In Methylorubrum extorquens (strain PA1) (Methylobacterium extorquens), this protein is Anthranilate phosphoribosyltransferase.